The sequence spans 64 residues: Large ribosomal subunit protein bL35 (64 aa).

Residues 20–42 (GRVKREKMYGSHNLEKKNRKRTR) form a disordered region. A compositionally biased stretch (basic and acidic residues) spans 25 to 35 (EKMYGSHNLEK).

This sequence belongs to the bacterial ribosomal protein bL35 family.

The sequence is that of Large ribosomal subunit protein bL35 from Chlorobium phaeobacteroides (strain BS1).